Reading from the N-terminus, the 641-residue chain is Probable serine protease FE772_23065 (641 aa).

Residues 532–552 (WVELIAILAAAGWIRVMLIGL) traverse the membrane as a helical segment.

The protein belongs to the peptidase S1 family.

Its subcellular location is the cell inner membrane. Functionally, possibly a dedicated protease for substrate gasdermin bGSDM; cleaves the bGSDM precursor, releasing the pore-forming moiety, which integrates into the membrane and triggers cell death. Involved in defense against bacteriophages. When this probable 4 gene operon (bGSDM-FE772_23060-FE772_23065-FE772_23070) is inserted into E.coli it provides nearly 100-fold protection against phages T5 and T6 and about 8-fold against phage T4. The operon without bGSDM no longer protects against phage. The sequence is that of Probable serine protease FE772_23065 from Lysobacter enzymogenes.